Here is a 333-residue protein sequence, read N- to C-terminus: Testin-2 (333 aa).

The signal sequence occupies residues 1 to 17 (MIAVLFLAILCLEIDST). Disulfide bonds link Cys-135–Cys-178, Cys-169–Cys-211, and Cys-269–Cys-322. An N-linked (GlcNAc...) asparagine glycan is attached at Asn-173. Active-site residues include His-276 and Asn-300.

It belongs to the peptidase C1 family. Expressed in testis and ovary. Low level in spleen, epididymis, kidney, and uterus. Expressed in primary cultures of Sertoli cells.

Its subcellular location is the secreted. The protein is Testin-2 of Mus musculus (Mouse).